The sequence spans 469 residues: REPADAAVREKRAKIKEMMEHAWNSYKRYAWGLNELKPITKEGHSSSLFGTIKGATIVDALDTLFIMGMESEFQEAKSWIAENLDFNVNAEISVFEVNIRFVGGLLSAYYLSGEEIFRKKAVELGIKLLPAFHTPSGIPWALLNIKSGIGRNWPWASGGSSILAEFGTLHLEFMHLSHLSGNPIFAEKVMNIRKVLNKLEKPEGLYPNYLNPSSGQWGQHHVSIGGLGDSFYEYLLKAWLMSEKTDLEAKKMYFDAVQAIETHLIRKSSGGLTYIAEWKGGLLEHKMGHLTCFAGGMFALGADGAPEGRAQHYLELGAEIARTCHESYNRTFMKLGPEAFRFDGGVEAIATRQNEKYYILRPEVVETYMYMWRLTHDPKYRKWAWEAVEALESHCRVNGGYSGLRDVYFTHEKYDNVQQSFFLAETLKYLYLIFSDDDLLPLEHWIFNTEAHLLPILPTDQKEVEVKVK.

Residues arginine 1–lysine 469 are Lumenal-facing. Cysteines 292 and 324 form a disulfide. Asparagine 329 carries an N-linked (GlcNAc...) asparagine glycan. The Proton donor role is filled by glutamate 338. Threonine 449 contributes to the Ca(2+) binding site.

Belongs to the glycosyl hydrolase 47 family. Ca(2+) is required as a cofactor.

The protein localises to the golgi apparatus membrane. The enzyme catalyses N(4)-(alpha-D-Man-(1-&gt;2)-alpha-D-Man-(1-&gt;2)-alpha-D-Man-(1-&gt;3)-[alpha-D-Man-(1-&gt;2)-alpha-D-Man-(1-&gt;3)-[alpha-D-Man-(1-&gt;2)-alpha-D-Man-(1-&gt;6)]-alpha-D-Man-(1-&gt;6)]-beta-D-Man-(1-&gt;4)-beta-D-GlcNAc-(1-&gt;4)-beta-D-GlcNAc)-L-asparaginyl-[protein] (N-glucan mannose isomer 9A1,2,3B1,2,3) + 4 H2O = N(4)-(alpha-D-Man-(1-&gt;3)-[alpha-D-Man-(1-&gt;3)-[alpha-D-Man-(1-&gt;6)]-alpha-D-Man-(1-&gt;6)]-beta-D-Man-(1-&gt;4)-beta-D-GlcNAc-(1-&gt;4)-beta-D-GlcNAc)-L-asparaginyl-[protein] (N-glucan mannose isomer 5A1,2) + 4 beta-D-mannose. It catalyses the reaction N(4)-(alpha-D-Man-(1-&gt;2)-alpha-D-Man-(1-&gt;2)-alpha-D-Man-(1-&gt;3)-[alpha-D-Man-(1-&gt;3)-[alpha-D-Man-(1-&gt;2)-alpha-D-Man-(1-&gt;6)]-alpha-D-Man-(1-&gt;6)]-beta-D-Man-(1-&gt;4)-beta-D-GlcNAc-(1-&gt;4)-beta-D-GlcNAc)-L-asparaginyl-[protein] (N-glucan mannose isomer 8A1,2,3B1,3) + 3 H2O = N(4)-(alpha-D-Man-(1-&gt;3)-[alpha-D-Man-(1-&gt;3)-[alpha-D-Man-(1-&gt;6)]-alpha-D-Man-(1-&gt;6)]-beta-D-Man-(1-&gt;4)-beta-D-GlcNAc-(1-&gt;4)-beta-D-GlcNAc)-L-asparaginyl-[protein] (N-glucan mannose isomer 5A1,2) + 3 beta-D-mannose. It functions in the pathway protein modification; protein glycosylation. With respect to regulation, inhibited by both 1-deoxymannojirimycin and kifunensine. Involved in the maturation of Asn-linked oligosaccharides. Progressively trim alpha-1,2-linked mannose residues from Man(9)GlcNAc(2) to produce Man(5)GlcNAc(2). This chain is Mannosyl-oligosaccharide 1,2-alpha-mannosidase IA (MAN1A1), found in Oryctolagus cuniculus (Rabbit).